The chain runs to 400 residues: Acetate kinase (400 aa).

Residue asparagine 10 participates in Mg(2+) binding. Residue lysine 17 participates in ATP binding. Arginine 91 provides a ligand contact to substrate. Aspartate 150 serves as the catalytic Proton donor/acceptor. ATP contacts are provided by residues histidine 210 to glycine 214, aspartate 285 to arginine 287, and glycine 333 to asparagine 337. Residue glutamate 387 participates in Mg(2+) binding.

It belongs to the acetokinase family. As to quaternary structure, homodimer. Mg(2+) serves as cofactor. Requires Mn(2+) as cofactor.

It is found in the cytoplasm. It carries out the reaction acetate + ATP = acetyl phosphate + ADP. Its pathway is metabolic intermediate biosynthesis; acetyl-CoA biosynthesis; acetyl-CoA from acetate: step 1/2. Its function is as follows. Catalyzes the formation of acetyl phosphate from acetate and ATP. Can also catalyze the reverse reaction. This Yersinia pestis bv. Antiqua (strain Antiqua) protein is Acetate kinase.